Consider the following 311-residue polypeptide: Probable manganese-dependent inorganic pyrophosphatase (311 aa).

Mn(2+)-binding residues include histidine 9, aspartate 13, aspartate 15, aspartate 77, histidine 99, and aspartate 151.

It belongs to the PPase class C family. The cofactor is Mn(2+).

It is found in the cytoplasm. The catalysed reaction is diphosphate + H2O = 2 phosphate + H(+). The protein is Probable manganese-dependent inorganic pyrophosphatase of Streptococcus agalactiae serotype III (strain NEM316).